Reading from the N-terminus, the 792-residue chain is Receptor-like protein 54 (792 aa).

Positions Met1 to Ser21 are cleaved as a signal peptide. The Extracellular segment spans residues Asp22 to Lys758. N-linked (GlcNAc...) asparagine glycans are attached at residues Asn68 and Asn107. LRR repeat units follow at residues Gln114 to Arg137, Thr139 to Leu162, Ser163 to Leu187, Glu189 to Met209, Phe211 to Ala233, Ser235 to Leu258, Ala259 to Phe282, Lys283 to Ser302, Glu303 to Asp324, Leu325 to Leu349, Ser351 to Asn374, and Ser375 to Asn399. An N-linked (GlcNAc...) asparagine glycan is attached at Asn161. N-linked (GlcNAc...) asparagine glycosylation is present at Asn230. Residues Asn304 and Asn314 are each glycosylated (N-linked (GlcNAc...) asparagine). N-linked (GlcNAc...) asparagine glycans are attached at residues Asn356 and Asn374. The stretch at Ile400–Lys418 is one LRR 13; degenerate repeat. 4 LRR repeats span residues Arg419 to Val443, Ser444 to Leu470, Asp472 to Cys489, and Thr490 to Arg515. Asn431, Asn442, Asn454, Asn488, and Asn503 each carry an N-linked (GlcNAc...) asparagine glycan. One copy of the LRR 18; degenerate repeat lies at Leu516–Ser536. 5 LRR repeats span residues Phe539–Asn563, Asp614–Leu637, Lys638–Leu661, Lys662–Leu685, and Phe687–Gly709. N-linked (GlcNAc...) asparagine glycosylation is found at Asn553 and Asn563. The N-linked (GlcNAc...) asparagine glycan is linked to Asn647. N-linked (GlcNAc...) asparagine glycosylation is present at Asn692. Residues Ala759–Ala779 form a helical membrane-spanning segment. Residues Arg780–Leu792 lie on the Cytoplasmic side of the membrane.

Belongs to the RLP family.

Its subcellular location is the cell membrane. This Arabidopsis thaliana (Mouse-ear cress) protein is Receptor-like protein 54.